The chain runs to 136 residues: Histone H3.4 (136 aa).

The disordered stretch occupies residues 1 to 41; it reads MARTKQTARKSTSIKAPRKQLAAKAARKSAPISGGIKKPHK.

It belongs to the histone H3 family. In terms of assembly, the nucleosome is a histone octamer containing two molecules each of H2A, H2B, H3 and H4 assembled in one H3-H4 heterotetramer and two H2A-H2B heterodimers. The octamer wraps approximately 147 bp of DNA.

Its subcellular location is the nucleus. The protein localises to the chromosome. Its function is as follows. Macronuclear replacement variant which replaces conventional H3 in a subset of nucleosomes. Nucleosomes wrap and compact DNA into chromatin, limiting DNA accessibility to the cellular machineries which require DNA as a template. Histones thereby play a central role in transcription regulation, DNA repair, DNA replication and chromosomal stability. DNA accessibility is regulated via a complex set of post-translational modifications of histones, also called histone code, and nucleosome remodeling. Functions redundantly to H3.3. H3.4 deposition is mainly transcription-associated, DNA replication-independent. Although not essential for vegetative growth, minor H3 variants are required for producing viable conjugation progeny by affecting late developmental stages of conjugation. In Tetrahymena thermophila (strain SB210), this protein is Histone H3.4 (HHT4).